A 521-amino-acid chain; its full sequence is Bifunctional purine biosynthesis protein PurH (521 aa).

Residues 1–147 (MAKITRALIS…KNNADVTVLV (147 aa)) form the MGS-like domain.

The protein belongs to the PurH family.

It carries out the reaction (6R)-10-formyltetrahydrofolate + 5-amino-1-(5-phospho-beta-D-ribosyl)imidazole-4-carboxamide = 5-formamido-1-(5-phospho-D-ribosyl)imidazole-4-carboxamide + (6S)-5,6,7,8-tetrahydrofolate. It catalyses the reaction IMP + H2O = 5-formamido-1-(5-phospho-D-ribosyl)imidazole-4-carboxamide. It participates in purine metabolism; IMP biosynthesis via de novo pathway; 5-formamido-1-(5-phospho-D-ribosyl)imidazole-4-carboxamide from 5-amino-1-(5-phospho-D-ribosyl)imidazole-4-carboxamide (10-formyl THF route): step 1/1. It functions in the pathway purine metabolism; IMP biosynthesis via de novo pathway; IMP from 5-formamido-1-(5-phospho-D-ribosyl)imidazole-4-carboxamide: step 1/1. The sequence is that of Bifunctional purine biosynthesis protein PurH from Geobacter sulfurreducens (strain ATCC 51573 / DSM 12127 / PCA).